The sequence spans 708 residues: Ion-translocating oxidoreductase complex subunit C (708 aa).

2 consecutive 4Fe-4S ferredoxin-type domains span residues 369-397 and 407-436; these read GEPQ…QQLY and KATT…VQYF. C377, C380, C383, C387, C416, C419, C422, and C426 together coordinate [4Fe-4S] cluster. The segment at 630–682 is disordered; sequence AKARKLEQQQANAEPEEQIDPRKAAVEAAIARAKARKLEQQQANAEPEEQIDP.

It belongs to the 4Fe4S bacterial-type ferredoxin family. RnfC subfamily. The complex is composed of six subunits: RsxA, RsxB, RsxC, RsxD, RsxE and RsxG. [4Fe-4S] cluster is required as a cofactor.

It localises to the cell inner membrane. Part of a membrane-bound complex that couples electron transfer with translocation of ions across the membrane. Required to maintain the reduced state of SoxR. This is Ion-translocating oxidoreductase complex subunit C from Escherichia coli (strain UTI89 / UPEC).